The primary structure comprises 216 residues: RNA pyrophosphohydrolase (216 aa).

A Nudix hydrolase domain is found at 6-149 (GFRPNVGIIL…KRDVYQLALT (144 aa)). The Nudix box motif lies at 38–59 (GGIKYGETPMQAMYRELHEETG). The segment at 159-188 (AQRTDKSRGPRAPRYPRVANGHAASEAPAA) is disordered.

It belongs to the Nudix hydrolase family. RppH subfamily. The cofactor is a divalent metal cation.

In terms of biological role, accelerates the degradation of transcripts by removing pyrophosphate from the 5'-end of triphosphorylated RNA, leading to a more labile monophosphorylated state that can stimulate subsequent ribonuclease cleavage. The chain is RNA pyrophosphohydrolase from Burkholderia mallei (strain NCTC 10247).